Consider the following 184-residue polypeptide: Structural protein V8 (184 aa).

A disordered region spans residues 14 to 35; sequence IYNKSNTLTNTPSNPTGNTNTL.

It belongs to the sputnik virus V6 family.

Its subcellular location is the virion. This is Structural protein V8 from Sputnik virophage.